Reading from the N-terminus, the 22-residue chain is Caerin-3.1 (22 aa).

Lysine 22 is subject to Lysine amide.

It belongs to the frog skin active peptide (FSAP) family. Caerin subfamily. In terms of tissue distribution, expressed by the skin dorsal glands.

It localises to the secreted. Functionally, antibacterial peptide with narrow spectrum of activity. Inhibits the formation of NO by neuronal nitric oxide synthase. This chain is Caerin-3.1, found in Litoria rothii (Roth's tree frog).